The following is a 230-amino-acid chain: 7-cyano-7-deazaguanine synthase (230 aa).

Residue 8–18 (LSGGMDSAVVT) coordinates ATP. Zn(2+) contacts are provided by Cys-186, Cys-196, Cys-199, and Cys-202.

It belongs to the QueC family. The cofactor is Zn(2+).

The catalysed reaction is 7-carboxy-7-deazaguanine + NH4(+) + ATP = 7-cyano-7-deazaguanine + ADP + phosphate + H2O + H(+). The protein operates within purine metabolism; 7-cyano-7-deazaguanine biosynthesis. In terms of biological role, catalyzes the ATP-dependent conversion of 7-carboxy-7-deazaguanine (CDG) to 7-cyano-7-deazaguanine (preQ(0)). This chain is 7-cyano-7-deazaguanine synthase, found in Xylella fastidiosa (strain M23).